The primary structure comprises 604 residues: Ras guanine nucleotide exchange factor H (604 aa).

The span at Met1–Gly26 shows a compositional bias: polar residues. Residues Met1 to Ser61 form a disordered region. A compositionally biased stretch (low complexity) spans Ser27–Ser49. Residues Thr50 to Ser61 are compositionally biased toward polar residues. The LisH domain maps to Asn115–Phe147. An N-terminal Ras-GEF domain is found at Pro221–Tyr335. Residues Asp365–Ser591 enclose the Ras-GEF domain.

Component of the Sca1 complex composed of at least gefA, gefH, scaA, phr, and the protein phosphatase 2A subunits pppA and pho2B. Interacts directly with gefA and phr.

The protein resides in the cell membrane. Promotes the exchange of Ras-bound GDP by GTP. Component of the Sca1 complex, a regulator of cell motility, chemotaxis and signal relay. The Sca1 complex is recruited to the plasma membrane in a chemoattractant- and F-actin-dependent manner and is enriched at the leading edge of chemotaxing cells where it regulates F-actin dynamics and signal relay by controlling the activation of rasC and the downstream target of rapamycin complex 2 (TORC2)-Akt/protein kinase B (PKB) pathway. In Dictyostelium discoideum (Social amoeba), this protein is Ras guanine nucleotide exchange factor H (gefH).